The sequence spans 222 residues: Triosephosphate isomerase (222 aa).

9–11 (NYK) is a substrate binding site. H93 acts as the Electrophile in catalysis. The Proton acceptor role is filled by E141. Residues I146, G181, and 202–203 (AS) each bind substrate.

It belongs to the triosephosphate isomerase family. Homotetramer; dimer of dimers.

It localises to the cytoplasm. The enzyme catalyses D-glyceraldehyde 3-phosphate = dihydroxyacetone phosphate. It participates in carbohydrate biosynthesis; gluconeogenesis. Its pathway is carbohydrate degradation; glycolysis; D-glyceraldehyde 3-phosphate from glycerone phosphate: step 1/1. Functionally, involved in the gluconeogenesis. Catalyzes stereospecifically the conversion of dihydroxyacetone phosphate (DHAP) to D-glyceraldehyde-3-phosphate (G3P). This is Triosephosphate isomerase from Methanosarcina acetivorans (strain ATCC 35395 / DSM 2834 / JCM 12185 / C2A).